Reading from the N-terminus, the 222-residue chain is 2-amino-5-formylamino-6-ribosylaminopyrimidin-4(3H)-one 5'-monophosphate deformylase (222 aa).

4 residues coordinate Fe cation: Glu-29, His-31, Asp-40, and His-108.

It belongs to the creatininase superfamily. FAPy deformylase family. In terms of assembly, homodimer. It depends on Fe(2+) as a cofactor. Zn(2+) is required as a cofactor.

It carries out the reaction 2-amino-5-formylamino-6-(5-phospho-D-ribosylamino)pyrimidin-4(3H)-one + H2O = 2,5-diamino-6-(1-D-ribosylamino)pyrimidin-4(3H)-one 5'-phosphate + formate + H(+). The protein operates within cofactor biosynthesis; coenzyme F420 biosynthesis. It participates in cofactor biosynthesis; riboflavin biosynthesis. In terms of biological role, catalyzes the hydrolysis of the formamide of 2-amino-5-formylamino-6-ribosylamino-4(3H)-pyrimidinone 5'-monophosphate (FAPy) to form 2,5-diamino-6-ribosylamino-4(3H)-pyrimidinone 5'-phosphate (APy). The protein is 2-amino-5-formylamino-6-ribosylaminopyrimidin-4(3H)-one 5'-monophosphate deformylase of Methanocaldococcus infernus (strain DSM 11812 / JCM 15783 / ME).